A 509-amino-acid polypeptide reads, in one-letter code: 2,3-bisphosphoglycerate-independent phosphoglycerate mutase (509 aa).

Asp-11 lines the Mn(2+) pocket. Tyr-35 is subject to Phosphotyrosine. Ser-61 is a Mn(2+) binding site. The active-site Phosphoserine intermediate is Ser-61. Residues His-122, 152-153 (RD), Arg-184, Arg-190, 260-263 (RPDR), and Lys-335 each bind substrate. The Mn(2+) site is built by Asp-402, His-406, Asp-443, His-444, and His-461.

The protein belongs to the BPG-independent phosphoglycerate mutase family. As to quaternary structure, monomer. It depends on Mn(2+) as a cofactor.

The enzyme catalyses (2R)-2-phosphoglycerate = (2R)-3-phosphoglycerate. Its pathway is carbohydrate degradation; glycolysis; pyruvate from D-glyceraldehyde 3-phosphate: step 3/5. In terms of biological role, essential for rapid growth and for sporulation. Catalyzes the interconversion of 2-phosphoglycerate and 3-phosphoglycerate. In Bacillus cereus (strain ATCC 10987 / NRS 248), this protein is 2,3-bisphosphoglycerate-independent phosphoglycerate mutase.